A 231-amino-acid chain; its full sequence is ATP-dependent dethiobiotin synthetase BioD 2 (231 aa).

ATP is bound at residue 13-18; the sequence is SVGKTV. Threonine 17 serves as a coordination point for Mg(2+). Lysine 38 is an active-site residue. Residues aspartate 55, 112–115, 172–173, 201–203, and glutamine 208 each bind ATP; these read EGTG, NR, and PYL. Mg(2+) is bound by residues aspartate 55 and glutamate 112.

Belongs to the dethiobiotin synthetase family. Homodimer. It depends on Mg(2+) as a cofactor.

The protein localises to the cytoplasm. The catalysed reaction is (7R,8S)-7,8-diammoniononanoate + CO2 + ATP = (4R,5S)-dethiobiotin + ADP + phosphate + 3 H(+). Its pathway is cofactor biosynthesis; biotin biosynthesis; biotin from 7,8-diaminononanoate: step 1/2. Its function is as follows. Catalyzes a mechanistically unusual reaction, the ATP-dependent insertion of CO2 between the N7 and N8 nitrogen atoms of 7,8-diaminopelargonic acid (DAPA, also called 7,8-diammoniononanoate) to form a ureido ring. In Salmonella typhimurium (strain LT2 / SGSC1412 / ATCC 700720), this protein is ATP-dependent dethiobiotin synthetase BioD 2.